We begin with the raw amino-acid sequence, 478 residues long: Trigger factor (478 aa).

The disordered stretch occupies residues 1 to 41 (MAELADAPDLGSGARKGVRVRLPPPAPHKNGGKNESRGSGQ). The PPIase FKBP-type domain maps to 197–279 (GDMLVVEYEV…IKEIKKKVLP (83 aa)). Residues 455–472 (VEQKQEEEKKEEKEEVKN) are compositionally biased toward basic and acidic residues. Residues 455-478 (VEQKQEEEKKEEKEEVKNESQGNT) form a disordered region.

The protein belongs to the FKBP-type PPIase family. Tig subfamily.

The protein localises to the cytoplasm. It catalyses the reaction [protein]-peptidylproline (omega=180) = [protein]-peptidylproline (omega=0). Involved in protein export. Acts as a chaperone by maintaining the newly synthesized protein in an open conformation. Functions as a peptidyl-prolyl cis-trans isomerase. This is Trigger factor from Aquifex aeolicus (strain VF5).